The sequence spans 374 residues: 5-pentadecatrienyl resorcinol O-methyltransferase (374 aa).

Residues Asp-239, Asp-261, Met-262, and Lys-275 each coordinate S-adenosyl-L-methionine. His-279 functions as the Proton acceptor in the catalytic mechanism.

This sequence belongs to the class I-like SAM-binding methyltransferase superfamily. Cation-independent O-methyltransferase family. COMT subfamily. As to quaternary structure, homodimer. In terms of tissue distribution, expressed predominantly in root hairs.

It carries out the reaction (8Z,11Z)-5-(pentadeca-8,11,14-trien-1-yl)resorcinol + S-adenosyl-L-methionine = (8Z,11Z)-5-(pentadeca- 8,11,14-trien-1-yl)resorcinol-3-methyl ether + S-adenosyl-L-homocysteine + H(+). In terms of biological role, O-methyltransferase involved in the biosynthetic pathway of the phytotoxin sorgoleone, a potent broad-spectrum inhibitor active against many agronomically important monocot and dicot weed species. Substrate specificity for alkylresorcinols. Strong preference for a five carbons alkyl side chain. The protein is 5-pentadecatrienyl resorcinol O-methyltransferase (OMT3) of Sorghum bicolor (Sorghum).